Reading from the N-terminus, the 194-residue chain is ATP-dependent Clp protease proteolytic subunit (194 aa).

Catalysis depends on S97, which acts as the Nucleophile. H122 is an active-site residue.

The protein belongs to the peptidase S14 family. In terms of assembly, fourteen ClpP subunits assemble into 2 heptameric rings which stack back to back to give a disk-like structure with a central cavity, resembling the structure of eukaryotic proteasomes.

The protein resides in the cytoplasm. The enzyme catalyses Hydrolysis of proteins to small peptides in the presence of ATP and magnesium. alpha-casein is the usual test substrate. In the absence of ATP, only oligopeptides shorter than five residues are hydrolyzed (such as succinyl-Leu-Tyr-|-NHMec, and Leu-Tyr-Leu-|-Tyr-Trp, in which cleavage of the -Tyr-|-Leu- and -Tyr-|-Trp bonds also occurs).. Its function is as follows. Cleaves peptides in various proteins in a process that requires ATP hydrolysis. Has a chymotrypsin-like activity. Plays a major role in the degradation of misfolded proteins. The chain is ATP-dependent Clp protease proteolytic subunit from Thermus thermophilus (strain ATCC BAA-163 / DSM 7039 / HB27).